The primary structure comprises 328 residues: Olfactory receptor 4A16 (328 aa).

The Extracellular portion of the chain corresponds to 1–23; sequence MRPSSNVTEFVLLGLTQDPDVKK. N6 is a glycosylation site (N-linked (GlcNAc...) asparagine). The helical transmembrane segment at 24–47 threads the bilayer; it reads TLFVMFLLIYIVTMVGNLLIWVTT. Topologically, residues 48–55 are cytoplasmic; that stretch reads IGSPSLGS. The helical transmembrane segment at 56-77 threads the bilayer; it reads LMYFFLAYLSLMDAIYSTAMSP. Residues 78–98 lie on the Extracellular side of the membrane; that stretch reads KLMIDLLCDKIAISLSACMGQ. Cysteines 95 and 187 form a disulfide. Residues 99-118 traverse the membrane as a helical segment; it reads LFIEHLLGGAEVFLLVVMAY. The Cytoplasmic portion of the chain corresponds to 119–137; sequence DRYVAISKPLHYLNIMNRL. A helical transmembrane segment spans residues 138 to 156; it reads VCILLLVVAMIGGFVHSVV. At 157–193 the chain is on the extracellular side; it reads QIVFLYSLPICGPNVIDHSVCDMYPLLELLCLDTYFI. Residues 194 to 217 form a helical membrane-spanning segment; sequence GLTVVANGGIICMVIFTFLLISCG. Over 218–233 the chain is Cytoplasmic; that stretch reads VILNFLKTYSQEERHK. A helical membrane pass occupies residues 234–256; sequence ALPTCISHIIVVALVFVPCIFMY. At 257-267 the chain is on the extracellular side; that stretch reads VRPVSNFPFDK. Residues 268-287 form a helical membrane-spanning segment; that stretch reads LMTVFYSIITLMLNPLIYSL. At 288-328 the chain is on the cytoplasmic side; the sequence is RQSEMKNAMKNLWCEKLSIVRKRVSPTLNIFIPSSKATNRR.

The protein belongs to the G-protein coupled receptor 1 family.

The protein resides in the cell membrane. In terms of biological role, odorant receptor. The chain is Olfactory receptor 4A16 (OR4A16) from Homo sapiens (Human).